Here is a 492-residue protein sequence, read N- to C-terminus: Trypanothione reductase (492 aa).

An FAD-binding site is contributed by 36 to 52 (DVQMVHGPPFFSALGGT). The cysteines at positions 53 and 58 are disulfide-linked. His461 acts as the Proton acceptor in catalysis.

This sequence belongs to the class-I pyridine nucleotide-disulfide oxidoreductase family. In terms of assembly, homodimer. FAD is required as a cofactor.

It localises to the cytoplasm. It carries out the reaction trypanothione + NADP(+) = trypanothione disulfide + NADPH + H(+). Functionally, trypanothione is the parasite analog of glutathione; this enzyme is the equivalent of glutathione reductase. In Trypanosoma cruzi, this protein is Trypanothione reductase (TPR).